The chain runs to 506 residues: uncharacterized protein (506 aa).

Disordered regions lie at residues 104-144 and 397-456; these read PNSS…ATSS and QQQK…DQLP. Positions 130 to 144 are enriched in low complexity; the sequence is ESSPTLSSSSLATSS. Over residues 405 to 443 the composition is skewed to basic and acidic residues; it reads IKDEDKNEKENKSENEEKEKEKEKEKEKEKEKEKEKEKE. A coiled-coil region spans residues 405-455; sequence IKDEDKNEKENKSENEEKEKEKEKEKEKEKEKEKEKEKENEEGEEDNGDQL.

This is an uncharacterized protein from Dictyostelium discoideum (Social amoeba).